A 330-amino-acid chain; its full sequence is ADP-L-glycero-D-manno-heptose-6-epimerase (330 aa).

Residues 11–12 (FI), 32–33 (DN), Lys39, Lys54, 75–79 (EGACS), and Asn92 contribute to the NADP(+) site. Residue Tyr139 is the Proton acceptor of the active site. Lys143 contributes to the NADP(+) binding site. Asn168 contacts substrate. NADP(+)-binding residues include Val169 and Lys177. Lys177 functions as the Proton acceptor in the catalytic mechanism. Residues Arg179, His186, 200-203 (FGEY), Arg213, and Tyr292 each bind substrate.

Belongs to the NAD(P)-dependent epimerase/dehydratase family. HldD subfamily. As to quaternary structure, homopentamer. Requires NADP(+) as cofactor.

The catalysed reaction is ADP-D-glycero-beta-D-manno-heptose = ADP-L-glycero-beta-D-manno-heptose. It functions in the pathway nucleotide-sugar biosynthesis; ADP-L-glycero-beta-D-manno-heptose biosynthesis; ADP-L-glycero-beta-D-manno-heptose from D-glycero-beta-D-manno-heptose 7-phosphate: step 4/4. Its function is as follows. Catalyzes the interconversion between ADP-D-glycero-beta-D-manno-heptose and ADP-L-glycero-beta-D-manno-heptose via an epimerization at carbon 6 of the heptose. The sequence is that of ADP-L-glycero-D-manno-heptose-6-epimerase from Burkholderia vietnamiensis (strain G4 / LMG 22486) (Burkholderia cepacia (strain R1808)).